The primary structure comprises 206 residues: MLDRVVVLLSVLCLGVSSQPIPNNQHLFSMAVSRIHHLHLRAQRLFANFESSLQSDDQRQLNKIFLQDFCNSDYIISPIDKHETQRSSVLKLLLISKQLVESWEISSHFLPGGLAERSQISSRLAELREGIQMLITTNQEGAEVFSDSSTLPLAPPFGNFFQTQGGDELQRRSYELLACFKKDMHKVETYLTVAKCRLSTEANCTL.

Positions 1–18 (MLDRVVVLLSVLCLGVSS) are cleaved as a signal peptide. At Gln-19 the chain carries Pyrrolidone carboxylic acid. His-37 lines the Zn(2+) pocket. A disulfide bridge links Cys-70 with Cys-179. Residue Glu-188 participates in Zn(2+) binding. A disulfide bridge connects residues Cys-196 and Cys-204.

It belongs to the somatotropin/prolactin family.

The protein resides in the secreted. In terms of biological role, growth hormone plays an important role in growth control and is involved in the regulation of several anabolic processes. Implicated as an osmoregulatory substance important for seawater adaptation. This is Somatotropin (gh) from Pseudocaranx dentex (White trevally).